We begin with the raw amino-acid sequence, 150 residues long: SsrA-binding protein (150 aa).

This sequence belongs to the SmpB family.

The protein resides in the cytoplasm. Required for rescue of stalled ribosomes mediated by trans-translation. Binds to transfer-messenger RNA (tmRNA), required for stable association of tmRNA with ribosomes. tmRNA and SmpB together mimic tRNA shape, replacing the anticodon stem-loop with SmpB. tmRNA is encoded by the ssrA gene; the 2 termini fold to resemble tRNA(Ala) and it encodes a 'tag peptide', a short internal open reading frame. During trans-translation Ala-aminoacylated tmRNA acts like a tRNA, entering the A-site of stalled ribosomes, displacing the stalled mRNA. The ribosome then switches to translate the ORF on the tmRNA; the nascent peptide is terminated with the 'tag peptide' encoded by the tmRNA and targeted for degradation. The ribosome is freed to recommence translation, which seems to be the essential function of trans-translation. This is SsrA-binding protein from Polynucleobacter asymbioticus (strain DSM 18221 / CIP 109841 / QLW-P1DMWA-1) (Polynucleobacter necessarius subsp. asymbioticus).